The sequence spans 251 residues: uncharacterized protein (251 aa).

The Response regulatory domain occupies 3–118 (KVIICDDERI…QLEHILDILV (116 aa)). 4-aspartylphosphate is present on Asp55. One can recognise an HTH araC/xylS-type domain in the interval 152–249 (NQILSQIKQH…HMSPSDYNKQ (98 aa)). 2 consecutive DNA-binding regions (H-T-H motif) follow at residues 169–190 (LDLI…KEHV) and 216–239 (HYEI…KKYL).

In terms of processing, phosphorylated by SERP2405.

It localises to the cytoplasm. Functionally, probable member of the two-component regulatory system SERP2405/SERP2406. This is an uncharacterized protein from Staphylococcus epidermidis (strain ATCC 35984 / DSM 28319 / BCRC 17069 / CCUG 31568 / BM 3577 / RP62A).